A 99-amino-acid polypeptide reads, in one-letter code: Small ribosomal subunit protein uS19 (99 aa).

Residues 76–99 form a disordered region; that stretch reads PTRSFRGHAGGGKAEKGGSAPRKK.

Belongs to the universal ribosomal protein uS19 family.

Its function is as follows. Protein S19 forms a complex with S13 that binds strongly to the 16S ribosomal RNA. The protein is Small ribosomal subunit protein uS19 of Pelodictyon phaeoclathratiforme (strain DSM 5477 / BU-1).